The sequence spans 88 residues: Kunitz-type U15-theraphotoxin-Hhn1i (88 aa).

A signal peptide spans 1-27 (MGTARFLRAVLLLSVLLMVTFPALLSA). A propeptide spanning residues 28 to 33 (EHHDGR) is cleaved from the precursor. The region spanning 37–85 (CRLPSDSGDCLRFFEMRYFDGTTCTKFVYGGYGGNDNRFPTEKACMKRC) is the BPTI/Kunitz inhibitor domain. 2 disulfide bridges follow: Cys37–Cys85 and Cys60–Cys81.

The protein belongs to the venom Kunitz-type family. 03 (sub-Kunitz) subfamily. As to expression, expressed by the venom gland.

The protein localises to the secreted. Functionally, serine protease inhibitor that inhibits trypsin at a molar ratio of 1:1. The sequence is that of Kunitz-type U15-theraphotoxin-Hhn1i from Cyriopagopus hainanus (Chinese bird spider).